We begin with the raw amino-acid sequence, 152 residues long: Transcriptional repressor NrdR (152 aa).

A zinc finger lies at 3–34 (CPFCHNEQSRVIDSRVIDSGTSIRRRRECAAC). The region spanning 46–136 (LSVVKRNGLA…VYKSFESADD (91 aa)) is the ATP-cone domain.

This sequence belongs to the NrdR family. Zn(2+) serves as cofactor.

Its function is as follows. Negatively regulates transcription of bacterial ribonucleotide reductase nrd genes and operons by binding to NrdR-boxes. The polypeptide is Transcriptional repressor NrdR (Corynebacterium aurimucosum (strain ATCC 700975 / DSM 44827 / CIP 107346 / CN-1) (Corynebacterium nigricans)).